We begin with the raw amino-acid sequence, 272 residues long: Glutamate racemase (272 aa).

Residues 16 to 17 (DS) and 48 to 49 (YG) contribute to the substrate site. Residue C79 is the Proton donor/acceptor of the active site. 80–81 (NT) contributes to the substrate binding site. C191 (proton donor/acceptor) is an active-site residue. 192–193 (TH) lines the substrate pocket.

This sequence belongs to the aspartate/glutamate racemases family.

The catalysed reaction is L-glutamate = D-glutamate. The protein operates within cell wall biogenesis; peptidoglycan biosynthesis. Functionally, provides the (R)-glutamate required for cell wall biosynthesis. This Chlorobaculum parvum (strain DSM 263 / NCIMB 8327) (Chlorobium vibrioforme subsp. thiosulfatophilum) protein is Glutamate racemase.